The primary structure comprises 84 residues: Large ribosomal subunit protein bL31 (84 aa).

Disordered regions lie at residues Met-1 to Asn-41 and Arg-63 to Glu-84. Residues Glu-21–Thr-30 show a composition bias toward polar residues. Over residues Thr-68–Glu-84 the composition is skewed to acidic residues.

This sequence belongs to the bacterial ribosomal protein bL31 family. Type A subfamily. In terms of assembly, part of the 50S ribosomal subunit.

Binds the 23S rRNA. The protein is Large ribosomal subunit protein bL31 of Salinibacter ruber (strain DSM 13855 / M31).